A 238-amino-acid polypeptide reads, in one-letter code: Probable transcriptional regulatory protein VPA0011 (238 aa).

The protein belongs to the TACO1 family.

The protein resides in the cytoplasm. This is Probable transcriptional regulatory protein VPA0011 from Vibrio parahaemolyticus serotype O3:K6 (strain RIMD 2210633).